The following is a 301-amino-acid chain: Probable alpha-L-glutamate ligase 1 (301 aa).

The ATP-grasp domain occupies 104–287 (LQLLSRKGIG…VTEPIVEYIE (184 aa)). Residues Lys141, 178–179 (EY), Asp187, and 211–213 (RSN) contribute to the ATP site. Mg(2+) contacts are provided by Asp248, Glu260, and Asn262. Mn(2+) is bound by residues Asp248, Glu260, and Asn262.

The protein belongs to the RimK family. Mg(2+) is required as a cofactor. The cofactor is Mn(2+).

This chain is Probable alpha-L-glutamate ligase 1, found in Shewanella oneidensis (strain ATCC 700550 / JCM 31522 / CIP 106686 / LMG 19005 / NCIMB 14063 / MR-1).